Here is a 230-residue protein sequence, read N- to C-terminus: V-type proton ATPase subunit E (230 aa).

Belongs to the V-ATPase E subunit family. V-ATPase is a heteromultimeric enzyme composed of a peripheral catalytic V1 complex (components A to H) attached to an integral membrane V0 proton pore complex (components: a, c, c', c'' and d).

Subunit of the peripheral V1 complex of vacuolar ATPase essential for assembly or catalytic function. V-ATPase is responsible for acidifying a variety of intracellular compartments in eukaryotic cells. This chain is V-type proton ATPase subunit E (VATE), found in Citrus limon (Lemon).